A 1187-amino-acid chain; its full sequence is Trafficking protein particle complex II-specific subunit 120 homolog (1187 aa).

The segment at 1037-1059 (GTTAKTDSSKEPGDGSSRSADES) is disordered.

This sequence belongs to the TRS120 family. As to quaternary structure, part of the multisubunit TRAPP (transport protein particle) II complex composed of BET3, BET5, TRS20, TRS23, TRS31, TRS33, TRS65, TRS85, TRS120 and TRS130.

The protein resides in the golgi apparatus. It localises to the trans-Golgi network. Its subcellular location is the early endosome. Functionally, specific subunit of the TRAPP II complex, a highly conserved vesicle tethering complex that is required for the proper transport of proteins in post-Golgi trafficking pathways to the growing cell plate in mitotic active cells. The sequence is that of Trafficking protein particle complex II-specific subunit 120 homolog from Oryza sativa subsp. japonica (Rice).